The primary structure comprises 664 residues: Protein SIEVE ELEMENT OCCLUSION C (664 aa).

In Arabidopsis thaliana (Mouse-ear cress), this protein is Protein SIEVE ELEMENT OCCLUSION C.